A 304-amino-acid polypeptide reads, in one-letter code: Tegument protein VP22 (304 aa).

Disordered regions lie at residues 23-68 and 112-184; these read YSTV…PNDD and STSN…GTPK. A compositionally biased stretch (basic and acidic residues) spans 43-58; the sequence is RENDLYDKQSVSKEND. The span at 123 to 142 shows a compositional bias: pro residues; the sequence is AQPPPRGAAAAPPPRVPTRP. Residues 143–154 are compositionally biased toward low complexity; sequence PTRAAATSTTPR. The Nuclear localization signal motif lies at 160–163; that stretch reads PKQR. Positions 233–245 match the Nuclear export signal motif; that stretch reads LDRFLKAAAIRIL. Positions 262–304 are disordered; sequence STPDGYAAAGPNGYDRRPRTASRRRSLKCKPPADDFFDDTNSG. Positions 280–289 are enriched in basic residues; sequence RTASRRRSLK.

It belongs to the alphaherpesvirinae VP22 tegument protein family. In terms of assembly, interacts with gE (via C-terminus); this interaction is necessary for the recruitment of VP22 to the Golgi and its packaging into virions. Interacts with gM (via C-terminus). Interacts with VP16; this interaction allows the formation of a tripartite complex composed of VP16, VP22 and UL41/VHS. Interacts with the capsid-binding protein UL16. Interacts with host CGAS. Highly phosphorylated in the host cell. Packaging is selective for underphosphorylated forms.

The protein resides in the virion tegument. The protein localises to the host cytoplasm. It localises to the host nucleus. It is found in the host Golgi apparatus. In terms of biological role, tegument protein that plays different roles during the time course of infection. Participates in both the accumulation of viral mRNAs and viral protein translation at late time of infection. Modulates the RNase activity of the virion host shutoff protein UL41 probably to ensure necessary levels of key cellular mRNAs and proteins. Plays a role in microtubule reorganization that occurs after viral infection by stabilizing microtubule network. Plays a role in the inhibition of host innate immune system by targeting the CGAS enzymatic activity which is the principal cytosolic DNA sensor that detects invading viral DNA. Acts by mediating disruption of liquid-like droplets in which CGAS is activated, thereby preventing CGAS activity. The sequence is that of Tegument protein VP22 from Equine herpesvirus 1 (strain Ab4p) (EHV-1).